Consider the following 154-residue polypeptide: SKP1-like protein 13 (154 aa).

An interaction with the F-box domain of F-box proteins region spans residues 96–154 (MLAANYLNIKDLLDLGCQTVADMITGKKPDEIRALLGIENDFTPEEEEEIRKENQWAFE).

This sequence belongs to the SKP1 family. As to quaternary structure, part of a SCF (SKP1-cullin-F-box) protein ligase complex. Interacts with ADO3/FKF1, EBF1, PP2A13, SKIP15, SKIP16, CPR1/CPR30, At1g55000, At3g61590, At1g67340, At1g78100, At3g04660, At4g38940, At4g39550 and At5g49610. In terms of tissue distribution, mostly expressed in inflorescences, and, to a lower extent, in seedlings and siliques. Also detected in cotyledons, leaves, pollen and seeds.

The protein resides in the nucleus. It participates in protein modification; protein ubiquitination. Functionally, involved in ubiquitination and subsequent proteasomal degradation of target proteins. Together with CUL1, RBX1 and a F-box protein, it forms a SCF E3 ubiquitin ligase complex. The functional specificity of this complex depends on the type of F-box protein. In the SCF complex, it serves as an adapter that links the F-box protein to CUL1. The protein is SKP1-like protein 13 (ASK13) of Arabidopsis thaliana (Mouse-ear cress).